The sequence spans 245 residues: Probable phosphatase YcdX (245 aa).

Zn(2+) contacts are provided by H7, H9, H15, H40, E73, H101, H131, D192, and H194.

It belongs to the PHP family. As to quaternary structure, homotrimer. Requires Zn(2+) as cofactor.

This is Probable phosphatase YcdX from Shigella flexneri serotype 5b (strain 8401).